A 324-amino-acid polypeptide reads, in one-letter code: DNA primase small subunit PriS (324 aa).

Catalysis depends on residues Asp-94, Asp-96, and Asp-274.

The protein belongs to the eukaryotic-type primase small subunit family. In terms of assembly, heterodimer of a small subunit (PriS) and a large subunit (PriL). It depends on Mg(2+) as a cofactor. Requires Mn(2+) as cofactor.

Its function is as follows. Catalytic subunit of DNA primase, an RNA polymerase that catalyzes the synthesis of short RNA molecules used as primers for DNA polymerase during DNA replication. The small subunit contains the primase catalytic core and has DNA synthesis activity on its own. Binding to the large subunit stabilizes and modulates the activity, increasing the rate of DNA synthesis while decreasing the length of the DNA fragments, and conferring RNA synthesis capability. The DNA polymerase activity may enable DNA primase to also catalyze primer extension after primer synthesis. May also play a role in DNA repair. The chain is DNA primase small subunit PriS from Methanobrevibacter smithii (strain ATCC 35061 / DSM 861 / OCM 144 / PS).